Reading from the N-terminus, the 128-residue chain is MKLRITLALTSVLAFCVFGDKENENLMENLLEDDLLDIFTDAIHMERQETNQECIAKWKSCAGRKLDCCEGLECWKRRWGHEVCVPITQKIFCLEKWKSCFERKYDCCEELECWERRGNKHPVCAPKQ.

Residues 1–19 (MKLRITLALTSVLAFCVFG) form the signal peptide. The propeptide occupies 20 to 47 (DKENENLMENLLEDDLLDIFTDAIHMER). Intrachain disulfides connect Cys-54-Cys-69, Cys-61-Cys-74, Cys-68-Cys-84, Cys-93-Cys-108, Cys-100-Cys-113, and Cys-107-Cys-124. 2 Domain repeats span residues 54–84 (CIAK…HEVC) and 93–124 (CLEK…HPVC). Positions 54–124 (CIAKWKSCAG…ERRGNKHPVC (71 aa)) are 2 X approximate repeats with cysteine pattern C-C-CC-C-C.

The protein belongs to the psalmotoxin-1 family. Double-knot toxin subfamily. In terms of tissue distribution, expressed by the venom gland.

Its subcellular location is the secreted. Functionally, this toxin potently and selectively inhibits ASIC1a, an isoform of the gene ASIC1. It incompletely inhibits ASIC1a activation in a pH-independent and slowly reversible manner. This toxin acts by binding to and stabilizing the closed state of the channel, thereby impeding the transition into a conducting state. This toxin may bind to the acidic pocket of ASIC1a, since mutation of a key residue of this pocket (Arg-350) abolishes the ability of the toxin to inhibit ASIC1a. In vivo, this toxin protects the brain from neuronal injury when administered up to 8 hours after stroke onset. This chain is Pi-hexatoxin-Hi1c, found in Hadronyche infensa (Fraser island funnel-web spider).